The following is a 162-amino-acid chain: Photosystem II extrinsic protein V (162 aa).

An N-terminal signal peptide occupies residues 1-25 (MFKKFSALFTLLFTLCLVNPMLVYS). 4 residues coordinate heme c: Cys-62, Cys-65, His-66, and His-117.

It belongs to the cytochrome c family. PsbV subfamily. In terms of assembly, PSII is composed of 1 copy each of membrane proteins PsbA, PsbB, PsbC, PsbD, PsbE, PsbF, PsbH, PsbI, PsbJ, PsbK, PsbL, PsbM, PsbT, PsbX, PsbY, PsbZ, Psb30/Ycf12, at least 3 peripheral proteins of the oxygen-evolving complex and a large number of cofactors. It forms dimeric complexes. It depends on heme c as a cofactor.

The protein localises to the plastid. The protein resides in the chloroplast thylakoid membrane. Its function is as follows. One of the extrinsic, lumenal subunits of photosystem II (PSII). PSII is a light-driven water plastoquinone oxidoreductase, using light energy to abstract electrons from H(2)O, generating a proton gradient subsequently used for ATP formation. The extrinsic proteins stabilize the structure of photosystem II oxygen-evolving complex (OEC), the ion environment of oxygen evolution and protect the OEC against heat-induced inactivation. The protein is Photosystem II extrinsic protein V of Guillardia theta (Cryptophyte).